We begin with the raw amino-acid sequence, 47 residues long: Large ribosomal subunit protein eL40 (47 aa).

This sequence belongs to the eukaryotic ribosomal protein eL40 family.

In Methanococcus vannielii (strain ATCC 35089 / DSM 1224 / JCM 13029 / OCM 148 / SB), this protein is Large ribosomal subunit protein eL40.